The following is a 126-amino-acid chain: Fluoride-specific ion channel FluC (126 aa).

The next 4 helical transmembrane spans lie at 6 to 26 (FVAV…FSVL), 36 to 56 (YGTL…VGFF), 69 to 89 (LAIT…SEVV), and 99 to 119 (WAAM…ALGL). 2 residues coordinate Na(+): Gly76 and Thr79.

It belongs to the fluoride channel Fluc/FEX (TC 1.A.43) family.

Its subcellular location is the cell inner membrane. It carries out the reaction fluoride(in) = fluoride(out). With respect to regulation, na(+) is not transported, but it plays an essential structural role and its presence is essential for fluoride channel function. Functionally, fluoride-specific ion channel. Important for reducing fluoride concentration in the cell, thus reducing its toxicity. This is Fluoride-specific ion channel FluC from Cupriavidus taiwanensis (strain DSM 17343 / BCRC 17206 / CCUG 44338 / CIP 107171 / LMG 19424 / R1) (Ralstonia taiwanensis (strain LMG 19424)).